Consider the following 178-residue polypeptide: Acireductone dioxygenase (178 aa).

Fe(2+)-binding residues include His-87, His-89, Glu-93, and His-132. Positions 87, 89, 93, and 132 each coordinate Ni(2+).

Belongs to the acireductone dioxygenase (ARD) family. It depends on Fe(2+) as a cofactor. The cofactor is Ni(2+).

The protein resides in the cytoplasm. It is found in the nucleus. It catalyses the reaction 1,2-dihydroxy-5-(methylsulfanyl)pent-1-en-3-one + O2 = 4-methylsulfanyl-2-oxobutanoate + formate + 2 H(+). The enzyme catalyses 1,2-dihydroxy-5-(methylsulfanyl)pent-1-en-3-one + O2 = 3-(methylsulfanyl)propanoate + CO + formate + 2 H(+). It functions in the pathway amino-acid biosynthesis; L-methionine biosynthesis via salvage pathway; L-methionine from S-methyl-5-thio-alpha-D-ribose 1-phosphate: step 5/6. In terms of biological role, catalyzes 2 different reactions between oxygen and the acireductone 1,2-dihydroxy-3-keto-5-methylthiopentene (DHK-MTPene) depending upon the metal bound in the active site. Fe-containing acireductone dioxygenase (Fe-ARD) produces formate and 2-keto-4-methylthiobutyrate (KMTB), the alpha-ketoacid precursor of methionine in the methionine recycle pathway. Ni-containing acireductone dioxygenase (Ni-ARD) produces methylthiopropionate, carbon monoxide and formate, and does not lie on the methionine recycle pathway. The protein is Acireductone dioxygenase of Candida albicans (strain SC5314 / ATCC MYA-2876) (Yeast).